A 308-amino-acid polypeptide reads, in one-letter code: Uridylate cyclase (308 aa).

Positions 62 and 106 each coordinate Mn(2+).

Belongs to the adenylyl cyclase class-4/guanylyl cyclase family. Pyrimidine cyclase subfamily. As to quaternary structure, homodimer. Mn(2+) is required as a cofactor.

The protein localises to the cytoplasm. The catalysed reaction is GTP = 3',5'-cyclic GMP + diphosphate. It carries out the reaction UTP = 3',5'-cyclic UMP + diphosphate. Pycsar (pyrimidine cyclase system for antiphage resistance) provides immunity against bacteriophage. The pyrimidine cyclase (PycC) synthesizes cyclic nucleotides in response to infection; these serve as specific second messenger signals. The signals activate the adjacent effector, leading to bacterial cell death and abortive phage infection. A clade D Pycsar system. Functionally, the pyrimidine cyclase gene of a two-gene Pycsar system, generates cyclic UMP (cUMP) from UTP as well as cGMP from GTP to a lesser extent, has little to no activity on ATP or CTP. Expression of this and adjacent effector PtPycTM (AC A0A4Q9KQH5) probably confers resistance to bacteriophage. The genes are probably only expressed in response to bacteriophage infection. In Propioniciclava tarda, this protein is Uridylate cyclase.